A 224-amino-acid polypeptide reads, in one-letter code: Thiamine-phosphate synthase (224 aa).

4-amino-2-methyl-5-(diphosphooxymethyl)pyrimidine is bound by residues 44–48 (QFREK) and Asn79. Positions 80 and 99 each coordinate Mg(2+). Ser117 provides a ligand contact to 4-amino-2-methyl-5-(diphosphooxymethyl)pyrimidine. 143–145 (TET) serves as a coordination point for 2-[(2R,5Z)-2-carboxy-4-methylthiazol-5(2H)-ylidene]ethyl phosphate. Position 146 (Lys146) interacts with 4-amino-2-methyl-5-(diphosphooxymethyl)pyrimidine. Residues Gly175 and 195–196 (IS) each bind 2-[(2R,5Z)-2-carboxy-4-methylthiazol-5(2H)-ylidene]ethyl phosphate.

It belongs to the thiamine-phosphate synthase family. The cofactor is Mg(2+).

The enzyme catalyses 2-[(2R,5Z)-2-carboxy-4-methylthiazol-5(2H)-ylidene]ethyl phosphate + 4-amino-2-methyl-5-(diphosphooxymethyl)pyrimidine + 2 H(+) = thiamine phosphate + CO2 + diphosphate. It carries out the reaction 2-(2-carboxy-4-methylthiazol-5-yl)ethyl phosphate + 4-amino-2-methyl-5-(diphosphooxymethyl)pyrimidine + 2 H(+) = thiamine phosphate + CO2 + diphosphate. The catalysed reaction is 4-methyl-5-(2-phosphooxyethyl)-thiazole + 4-amino-2-methyl-5-(diphosphooxymethyl)pyrimidine + H(+) = thiamine phosphate + diphosphate. It participates in cofactor biosynthesis; thiamine diphosphate biosynthesis; thiamine phosphate from 4-amino-2-methyl-5-diphosphomethylpyrimidine and 4-methyl-5-(2-phosphoethyl)-thiazole: step 1/1. Its function is as follows. Condenses 4-methyl-5-(beta-hydroxyethyl)thiazole monophosphate (THZ-P) and 2-methyl-4-amino-5-hydroxymethyl pyrimidine pyrophosphate (HMP-PP) to form thiamine monophosphate (TMP). This chain is Thiamine-phosphate synthase, found in Bacillus licheniformis (strain ATCC 14580 / DSM 13 / JCM 2505 / CCUG 7422 / NBRC 12200 / NCIMB 9375 / NCTC 10341 / NRRL NRS-1264 / Gibson 46).